A 561-amino-acid chain; its full sequence is MSSHGNSLFLRESGAGGGCLQGLQDSLQQRALRTRLRLQTMTREHVRRFLRRNAFILLTVSAVIIGVSLAFALRPYQLSYRQIKYFSFPGELLMRMLQMLVLPLIVSSLVTGMASLDNKATGRMGMRAAVYYMVTTVIAVFIGILMVTIIHPGKGSKEGLHREGRIETVPTADAFMDLVRNMFPPNLVEACFKQFKTQYSTRVVTRTIVRTDNGSELGASMSPTSSVENETSILENVTRALGTLQEVISFEETVPVPGSANGINALGLVVFSVAFGLVIGGMKHKGRVLRDFFDSLNEAIMRLVGIIIWYAPVGILFLIAGKILEMEDMAVLGGQLGMYTLTVIVGLFLHAGGVLPLIYFLVTHRNPFPFIGGMLQALITAMGTSSSSATLPITFRCLEEGLGVDRRITRFVLPVGATVNMDGTALYEALAAIFIAQVNNYELNLGQITTISITATAASVGAAGIPQAGLVTMVIVLTSVGLPTEDITLIIAVDWFLDRLRTMTNVLGDSIGAAVIEHLSQRELELQEAELTLPSLGKPYKSLMAQEKGASRGRGGNESVM.

Topologically, residues 1 to 52 (MSSHGNSLFLRESGAGGGCLQGLQDSLQQRALRTRLRLQTMTREHVRRFLRR) are cytoplasmic. At serine 2 the chain carries Phosphoserine. A run of 3 helical transmembrane segments spans residues 53–73 (NAFI…AFAL), 96–116 (MLQM…MASL), and 130–150 (VYYM…VTII). N-linked (GlcNAc...) asparagine glycosylation is found at asparagine 213, asparagine 229, and asparagine 236. The next 3 membrane-spanning stretches (helical) occupy residues 259–282 (SANG…IGGM), 292–319 (FFDS…LFLI), and 341–362 (LTVI…YFLV). An intramembrane region (discontinuously helical) is located at residues 368 to 398 (FPFIGGMLQALITAMGTSSSSATLPITFRCL). Position 385-387 (385-387 (SSS)) interacts with L-aspartate. Residues 408–434 (ITRFVLPVGATVNMDGTALYEALAAIF) form a helical membrane-spanning segment. Na(+) contacts are provided by glycine 416, threonine 418, and asparagine 420. L-aspartate contacts are provided by residues threonine 424, 465–469 (IPQAG), aspartate 498, and asparagine 505. The discontinuously helical intramembrane region spans 448-481 (ITTISITATAASVGAAGIPQAGLVTMVIVLTSVG). A helical transmembrane segment spans residues 495-516 (WFLDRLRTMTNVLGDSIGAAVI). Asparagine 505 and aspartate 509 together coordinate Na(+).

The protein belongs to the dicarboxylate/amino acid:cation symporter (DAACS) (TC 2.A.23) family. SLC1A6 subfamily. In terms of assembly, homotrimer. Brain specific.

It is found in the cell membrane. It catalyses the reaction K(+)(in) + L-glutamate(out) + 3 Na(+)(out) + H(+)(out) = K(+)(out) + L-glutamate(in) + 3 Na(+)(in) + H(+)(in). The catalysed reaction is K(+)(in) + L-aspartate(out) + 3 Na(+)(out) + H(+)(out) = K(+)(out) + L-aspartate(in) + 3 Na(+)(in) + H(+)(in). The enzyme catalyses D-aspartate(out) + K(+)(in) + 3 Na(+)(out) + H(+)(out) = D-aspartate(in) + K(+)(out) + 3 Na(+)(in) + H(+)(in). Its function is as follows. Sodium-dependent, high-affinity amino acid transporter that mediates the uptake of L-glutamate and also L-aspartate and D-aspartate. Functions as a symporter that transports one amino acid molecule together with two or three Na(+) ions and one proton, in parallel with the counter-transport of one K(+) ion. Mediates Cl(-) flux that is not coupled to amino acid transport; this avoids the accumulation of negative charges due to aspartate and Na(+) symport. Plays a redundant role in the rapid removal of released glutamate from the synaptic cleft, which is essential for terminating the postsynaptic action of glutamate. The sequence is that of Excitatory amino acid transporter 4 (Slc1a6) from Mus musculus (Mouse).